The primary structure comprises 288 residues: Damage-control phosphatase AF_1104 (288 aa).

Residues 7–10 carry the Subfamily I CxxC motif motif; the sequence is CPSC. Mn(2+)-binding residues include aspartate 160, asparagine 161, and aspartate 194. Positions 247–250 match the Subfamily I GNFE-like motif motif; sequence ANYE. The short motif at 267–268 is the Subfamily I KC motif element; it reads KC.

Belongs to the damage-control phosphatase family. Nucleotides phosphatase I subfamily. Requires [2Fe-2S] cluster as cofactor. It depends on Mn(2+) as a cofactor. Ni(2+) is required as a cofactor.

In terms of biological role, metal-dependent phosphatase with probable damage-control functions. Could hydrolyze oxidatively damaged purine nucleotides or their biosynthetic intermediates. The protein is Damage-control phosphatase AF_1104 of Archaeoglobus fulgidus (strain ATCC 49558 / DSM 4304 / JCM 9628 / NBRC 100126 / VC-16).